We begin with the raw amino-acid sequence, 341 residues long: Glycerol-3-phosphate dehydrogenase [NAD(P)+] (341 aa).

NADPH-binding residues include Ser-12, Trp-13, Arg-33, and Lys-107. Positions 107, 134, and 136 each coordinate sn-glycerol 3-phosphate. Residue Ala-138 participates in NADPH binding. Residues Lys-189, Asp-242, Ser-252, Arg-253, and Asn-254 each coordinate sn-glycerol 3-phosphate. Lys-189 acts as the Proton acceptor in catalysis. Arg-253 contacts NADPH. Residues Val-277 and Glu-279 each coordinate NADPH.

The protein belongs to the NAD-dependent glycerol-3-phosphate dehydrogenase family.

Its subcellular location is the cytoplasm. It catalyses the reaction sn-glycerol 3-phosphate + NAD(+) = dihydroxyacetone phosphate + NADH + H(+). The enzyme catalyses sn-glycerol 3-phosphate + NADP(+) = dihydroxyacetone phosphate + NADPH + H(+). It functions in the pathway membrane lipid metabolism; glycerophospholipid metabolism. Functionally, catalyzes the reduction of the glycolytic intermediate dihydroxyacetone phosphate (DHAP) to sn-glycerol 3-phosphate (G3P), the key precursor for phospholipid synthesis. This chain is Glycerol-3-phosphate dehydrogenase [NAD(P)+], found in Halothermothrix orenii (strain H 168 / OCM 544 / DSM 9562).